The chain runs to 215 residues: Cytochrome b6 (215 aa).

At 1–31 the chain is on the cytoplasmic side; that stretch reads MANVYDWFQERLEIQALADDVTSKYVPPHVN. Residues 32–52 traverse the membrane as a helical segment; the sequence is IFYCLGGITLTCFLIQFATGF. Cys35 is a heme c binding site. Topologically, residues 53-89 are lumenal, thylakoid; it reads AMTFYYKPTVTEAYASVQYIMNEVSFGWLIRSIHRWS. Heme b-binding residues include Arg83, His86, His100, and Arg103. A helical transmembrane segment spans residues 90–110; sequence ASMMVLMMILHVFRVYLTGGF. Residues 111 to 115 lie on the Cytoplasmic side of the membrane; the sequence is KKPRE. A helical membrane pass occupies residues 116–136; it reads LTWISGVILAVITVSFGVTGY. At 137–185 the chain is on the lumenal, thylakoid side; that stretch reads SLPWDQVGYWAVKIVSGVPEAIPVVGVLISDLLRGGSSVGQATLTRYYS. Residues 186–206 form a helical membrane-spanning segment; the sequence is AHTFVLPWLIAVFMLLHFLMI. Heme b contacts are provided by His187 and His202. The Cytoplasmic portion of the chain corresponds to 207–215; sequence RKQGISGPL. Lys208 contributes to the heme c binding site.

This sequence belongs to the cytochrome b family. PetB subfamily. As to quaternary structure, the 4 large subunits of the cytochrome b6-f complex are cytochrome b6, subunit IV (17 kDa polypeptide, PetD), cytochrome f and the Rieske protein, while the 4 small subunits are PetG, PetL, PetM and PetN. The complex functions as a dimer. Heme b serves as cofactor. It depends on heme c as a cofactor.

The protein resides in the cellular thylakoid membrane. Component of the cytochrome b6-f complex, which mediates electron transfer between photosystem II (PSII) and photosystem I (PSI), cyclic electron flow around PSI, and state transitions. The chain is Cytochrome b6 from Mastigocladus laminosus (Fischerella sp.).